The sequence spans 130 residues: Splicing regulatory small protein (130 aa).

The segment covering 1 to 10 (MRTKPQRPRA) has biased composition (basic residues). 2 disordered regions span residues 1–29 (MRTK…EETG) and 74–130 (GRAL…STRR). A mediates interaction with SRSF3 region spans residues 16-22 (GQPCGSP). Positions 77 to 98 (LEPKADPHTCPYGRKESRGEKV) are enriched in basic and acidic residues. Residues 120-130 (SLKSGSPSTRR) show a composition bias toward polar residues.

In terms of assembly, interacts with SRSF3; increases SRSF3 binding to specific exons.

It localises to the nucleus. In terms of biological role, interacts with the splicing factor SRSF3 and increases its binding to specific exons within pre-mRNA, thereby regulating exon-inclusion during alternative splicing. Does not directly bind pre-mRNA and could regulate a wider range of splicing factors through a similar mechanism. This Homo sapiens (Human) protein is Splicing regulatory small protein.